The following is a 171-amino-acid chain: MIREIIRMGDKRLLRVAPPVTNLGSAELHTLVADMFETMDAARGVGLAAPQIAVDLQLMVFGFDASERYPEAPAVPRTALANAQIEPLSEDMENGWEGCLSIPGLRAVIPRYRFIRYRGFAPDGSPIERDAEGFHARVVQHEYDNLVGRLYPSRIENFDTFGFEDVLSYDL.

C99 and H141 together coordinate Fe cation. The active site involves E142.

The protein belongs to the polypeptide deformylase family. Fe(2+) serves as cofactor.

The enzyme catalyses N-terminal N-formyl-L-methionyl-[peptide] + H2O = N-terminal L-methionyl-[peptide] + formate. Removes the formyl group from the N-terminal Met of newly synthesized proteins. Requires at least a dipeptide for an efficient rate of reaction. N-terminal L-methionine is a prerequisite for activity but the enzyme has broad specificity at other positions. This is Peptide deformylase 1 from Xanthomonas axonopodis pv. citri (strain 306).